Consider the following 156-residue polypeptide: 6,7-dimethyl-8-ribityllumazine synthase (156 aa).

5-amino-6-(D-ribitylamino)uracil contacts are provided by residues Phe-22, 57-59, and 81-83; these read AVE and TVI. A (2S)-2-hydroxy-3-oxobutyl phosphate-binding site is contributed by 86 to 87; sequence GT. His-89 functions as the Proton donor in the catalytic mechanism. Phe-114 provides a ligand contact to 5-amino-6-(D-ribitylamino)uracil. Position 128 (Arg-128) interacts with (2S)-2-hydroxy-3-oxobutyl phosphate.

The protein belongs to the DMRL synthase family. As to quaternary structure, forms an icosahedral capsid composed of 60 subunits, arranged as a dodecamer of pentamers.

The catalysed reaction is (2S)-2-hydroxy-3-oxobutyl phosphate + 5-amino-6-(D-ribitylamino)uracil = 6,7-dimethyl-8-(1-D-ribityl)lumazine + phosphate + 2 H2O + H(+). It participates in cofactor biosynthesis; riboflavin biosynthesis; riboflavin from 2-hydroxy-3-oxobutyl phosphate and 5-amino-6-(D-ribitylamino)uracil: step 1/2. In terms of biological role, catalyzes the formation of 6,7-dimethyl-8-ribityllumazine by condensation of 5-amino-6-(D-ribitylamino)uracil with 3,4-dihydroxy-2-butanone 4-phosphate. This is the penultimate step in the biosynthesis of riboflavin. This Vibrio campbellii (strain ATCC BAA-1116) protein is 6,7-dimethyl-8-ribityllumazine synthase.